Here is a 391-residue protein sequence, read N- to C-terminus: ATP phosphoribosyltransferase regulatory subunit (391 aa).

The protein belongs to the class-II aminoacyl-tRNA synthetase family. HisZ subfamily. As to quaternary structure, heteromultimer composed of HisG and HisZ subunits.

The protein resides in the cytoplasm. Its pathway is amino-acid biosynthesis; L-histidine biosynthesis; L-histidine from 5-phospho-alpha-D-ribose 1-diphosphate: step 1/9. Functionally, required for the first step of histidine biosynthesis. May allow the feedback regulation of ATP phosphoribosyltransferase activity by histidine. This chain is ATP phosphoribosyltransferase regulatory subunit, found in Nitrosomonas europaea (strain ATCC 19718 / CIP 103999 / KCTC 2705 / NBRC 14298).